We begin with the raw amino-acid sequence, 523 residues long: GMP synthase [glutamine-hydrolyzing] (523 aa).

One can recognise a Glutamine amidotransferase type-1 domain in the interval 18–208; it reads KILIVDFGGQ…LYNVCGAKGD (191 aa). The active-site Nucleophile is the Cys95. Catalysis depends on residues His182 and Glu184. One can recognise a GMPS ATP-PPase domain in the interval 209 to 398; sequence WNMKSFLAEA…LGLPDYLVHR (190 aa). 236-242 is a binding site for ATP; sequence SGGVDSS.

Homodimer.

It catalyses the reaction XMP + L-glutamine + ATP + H2O = GMP + L-glutamate + AMP + diphosphate + 2 H(+). It functions in the pathway purine metabolism; GMP biosynthesis; GMP from XMP (L-Gln route): step 1/1. In terms of biological role, catalyzes the synthesis of GMP from XMP. This Treponema denticola (strain ATCC 35405 / DSM 14222 / CIP 103919 / JCM 8153 / KCTC 15104) protein is GMP synthase [glutamine-hydrolyzing].